We begin with the raw amino-acid sequence, 563 residues long: MLEFAISAPLDTGAELLSDQVSANFPWLSLSILFPIVGAFLVPFIPDEGEGKQVRWFALGIALVTFLITVAAYLYGYDPSLSGLQLSERVSWLPDLGLTWAVGADGISMPLILLTSFITALAVLAAWPVTFKPKLFFFLILAMDGGQIAVFAVQDMLLFFLAWELELLPVYLLLAIWGGKKRQYAATKFIIYTAGSSLFILLVALAMGFFGGGTPNFEYTNLAQQSFGTGFQLLCYAGLLIAFGVKLPIVPLHTWLPDAHGEATAPVHMLLAGILLKMGGYALMRFNAQLLPEAHAQFAPLLIVLGVVNIIYAALTSFAQRNLKRKIAYSSISHMGFVLIGIGSFSALGTSGAMLQMISHGLIGASLFFLVGATYDRTHTLQLEEMGGVGQKMRIMFALWTVCALASLALPGMSGFVSELMVFVGFATDEAYTLTFRIVIAGLAAIGVILTPIYLLSMLREIFFGKENDQLVSHTNLVDAEPREVYIISCLLVPIIGIGLYPRLMTDSYTASIQELVKRDDLALQRIKKPSALMIRNTTMTPAVVSSPRLPITQTRSEQLTRK.

15 helical membrane-spanning segments follow: residues 25-45, 56-76, 90-110, 111-131, 133-153, 157-177, 189-209, 230-250, 264-284, 298-318, 335-355, 356-376, 397-417, 438-458, and 485-505; these read FPWL…VPFI, WFAL…YLYG, VSWL…ISMP, LILL…PVTF, PKLF…VFAV, LLFF…LAIW, FIIY…AMGF, GFQL…LPIV, TAPV…YALM, FAPL…LTSF, MGFV…GAML, QMIS…ATYD, FALW…SGFV, IVIA…LLSM, and VYII…PRLM.

This sequence belongs to the complex I subunit 4 family.

It is found in the cellular thylakoid membrane. It carries out the reaction a plastoquinone + NADH + (n+1) H(+)(in) = a plastoquinol + NAD(+) + n H(+)(out). It catalyses the reaction a plastoquinone + NADPH + (n+1) H(+)(in) = a plastoquinol + NADP(+) + n H(+)(out). In terms of biological role, NDH-1 shuttles electrons from NAD(P)H, via FMN and iron-sulfur (Fe-S) centers, to quinones in the respiratory chain. The immediate electron acceptor for the enzyme in this species is believed to be plastoquinone. Couples the redox reaction to proton translocation (for every two electrons transferred, four hydrogen ions are translocated across the cytoplasmic membrane), and thus conserves the redox energy in a proton gradient. This chain is NAD(P)H-quinone oxidoreductase chain 4, found in Prochlorococcus marinus (strain MIT 9313).